Consider the following 286-residue polypeptide: MAITAAASRLGTEPFSNAAKIELRSDASREEVEAVINAVYRHVLGNDYIMASERLVSAESLLRDGNLTVREFVRSVAKSELYKKKFFYNSFQTRFIELNYKHLLGRAPYDESEIVFHLDLYQNKGYDAEIDSYIDSVEYQNNFGDNIVPYYRGFETQPGQKTVGFNRMFRLYRGYANSDRAQIEGTKPRLARELATNKASSIVGPSGSNPAWGYRPSVDITPRKTLGNAVGENDRVYRIEVTGVRSPGYPSVRRSSYAIIVPYERLSEKIQQIHKLGGKIVSITSA.

The 179-residue stretch at 2–180 (AITAAASRLG…LYRGYANSDR (179 aa)) folds into the PBS-linker domain. The 53-residue stretch at 234 to 286 (DRVYRIEVTGVRSPGYPSVRRSSYAIIVPYERLSEKIQQIHKLGGKIVSITSA) folds into the CpcD-like domain.

It belongs to the phycobilisome linker protein family.

The protein resides in the cellular thylakoid membrane. Rod linker protein, associated with phycocyanin. Linker polypeptides determine the state of aggregation and the location of the disk-shaped phycobiliprotein units within the phycobilisome and modulate their spectroscopic properties in order to mediate a directed and optimal energy transfer. The polypeptide is Phycobilisome 32.1 kDa linker polypeptide, phycocyanin-associated, rod (cpcC) (Mastigocladus laminosus (Fischerella sp.)).